The primary structure comprises 225 residues: UPF0758 protein BAV2405 (225 aa).

Positions 103-225 constitute an MPN domain; it reads AMKHPEEVRR…ALSMAERGLI (123 aa). Positions 174, 176, and 187 each coordinate Zn(2+). The JAMM motif signature appears at 174 to 187; that stretch reads HNHPSGNPQPSAAD.

It belongs to the UPF0758 family.

The polypeptide is UPF0758 protein BAV2405 (Bordetella avium (strain 197N)).